The following is a 216-amino-acid chain: Phosphoribosylformylglycinamidine synthase subunit PurQ (216 aa).

The region spanning 2-216 is the Glutamine amidotransferase type-1 domain; it reads SIGVIVFPGS…GRRMLEALLG (215 aa). Cys86 serves as the catalytic Nucleophile. Catalysis depends on residues His193 and Glu195.

In terms of assembly, part of the FGAM synthase complex composed of 1 PurL, 1 PurQ and 2 PurS subunits.

The protein localises to the cytoplasm. It catalyses the reaction N(2)-formyl-N(1)-(5-phospho-beta-D-ribosyl)glycinamide + L-glutamine + ATP + H2O = 2-formamido-N(1)-(5-O-phospho-beta-D-ribosyl)acetamidine + L-glutamate + ADP + phosphate + H(+). The enzyme catalyses L-glutamine + H2O = L-glutamate + NH4(+). It functions in the pathway purine metabolism; IMP biosynthesis via de novo pathway; 5-amino-1-(5-phospho-D-ribosyl)imidazole from N(2)-formyl-N(1)-(5-phospho-D-ribosyl)glycinamide: step 1/2. In terms of biological role, part of the phosphoribosylformylglycinamidine synthase complex involved in the purines biosynthetic pathway. Catalyzes the ATP-dependent conversion of formylglycinamide ribonucleotide (FGAR) and glutamine to yield formylglycinamidine ribonucleotide (FGAM) and glutamate. The FGAM synthase complex is composed of three subunits. PurQ produces an ammonia molecule by converting glutamine to glutamate. PurL transfers the ammonia molecule to FGAR to form FGAM in an ATP-dependent manner. PurS interacts with PurQ and PurL and is thought to assist in the transfer of the ammonia molecule from PurQ to PurL. This chain is Phosphoribosylformylglycinamidine synthase subunit PurQ, found in Synechococcus sp. (strain CC9605).